Consider the following 216-residue polypeptide: Serine/threonine-protein phosphatase 1 (216 aa).

Asp-24, His-26, Asp-53, and Asn-79 together coordinate Mn(2+). The Proton donor role is filled by His-80. His-185 is a Mn(2+) binding site.

Belongs to the PPP phosphatase family. PP-1 subfamily. Requires Mn(2+) as cofactor.

The catalysed reaction is O-phospho-L-seryl-[protein] + H2O = L-seryl-[protein] + phosphate. It carries out the reaction O-phospho-L-threonyl-[protein] + H2O = L-threonyl-[protein] + phosphate. Inhibited by cadmium, copper, zinc when added cobalt when added concomitantly with manganese. Can hydrolyze phosphorylated Ser-, Thr- or Tyr-substrates in vitro. The natural substrate is unknown. The chain is Serine/threonine-protein phosphatase 1 (pphA) from Salmonella typhimurium (strain LT2 / SGSC1412 / ATCC 700720).